The chain runs to 333 residues: G-protein coupled receptor 146 (333 aa).

Residues 1 to 22 (MWSCGPLNSTAWAEEPLCRNLR) are Extracellular-facing. N-linked (GlcNAc...) asparagine glycosylation occurs at asparagine 8. The helical transmembrane segment at 23–43 (LGLWVLSLLYLGAGVPVSLGY) threads the bilayer. The Cytoplasmic portion of the chain corresponds to 44–64 (NALLVLANLASKNTMTMPDVY). Residues 65–85 (FVNMAVAGLVLTALAPAYLLG) traverse the membrane as a helical segment. The Extracellular portion of the chain corresponds to 86-101 (PAHSRWALWSLSSEAH). A helical transmembrane segment spans residues 102–122 (VTLLILFNVASLVTMYSTALL). The Cytoplasmic portion of the chain corresponds to 123-145 (SLDYYIERALPRTYMASVYNTRH). A helical membrane pass occupies residues 146–166 (VCGFVWGGAVLTSFSSLLFYI). The Extracellular portion of the chain corresponds to 167 to 188 (CSHVSSRIAECARMQNTEAADA). The chain crosses the membrane as a helical span at residues 189 to 209 (ILVLIGYVVPGLAVLYALALI). At 210–232 (SRIGKEDTPLDQDTSRLDPSVHR) the chain is on the cytoplasmic side. The chain crosses the membrane as a helical span at residues 233–253 (LLVATVCTQFGLWTPYYLSLG). Topologically, residues 254-277 (HTVLTSRGRTVEGHYLGILQVAKD) are extracellular. A helical membrane pass occupies residues 278–298 (LAKFLAFSSSSVTPLLYRYIN). Topologically, residues 299-333 (KAFPGKLRRLMKKMHCGRRHCSPDPSGIQQVMAQA) are cytoplasmic.

Belongs to the G-protein coupled receptor 1 family.

The protein localises to the cell membrane. Functionally, GPCR receptor required for the regulation of plasma cholesterol levels. Receptor for CHLSN, a gut derived hormone which mediates an inhibitory effect of intestinal cholesterol absorption on hepatic cholesterol synthesis. Cholesin-binding exerts an antagonistic effect by inhibiting PKA signaling and suppressing SREBF2-controlled cholesterol in the liver. The sequence is that of G-protein coupled receptor 146 (Gpr146) from Mus musculus (Mouse).